The primary structure comprises 274 residues: Urease accessory protein UreD (274 aa).

This sequence belongs to the UreD family. As to quaternary structure, ureD, UreF and UreG form a complex that acts as a GTP-hydrolysis-dependent molecular chaperone, activating the urease apoprotein by helping to assemble the nickel containing metallocenter of UreC. The UreE protein probably delivers the nickel.

Its subcellular location is the cytoplasm. Its function is as follows. Required for maturation of urease via the functional incorporation of the urease nickel metallocenter. The chain is Urease accessory protein UreD from Thermosynechococcus vestitus (strain NIES-2133 / IAM M-273 / BP-1).